The sequence spans 264 residues: Apolipoprotein A-I (264 aa).

The signal sequence occupies residues 1-18; sequence MKAVLLVVAALFLAGSQA. Tandem repeats lie at residues 67–88 and 89–110. The 10 X approximate tandem repeats stretch occupies residues 67-264; that stretch reads LRLSDNWDTL…DQASKQLAAQ (198 aa). Residues 111–121 form a 3; half-length repeat; it reads EDLQDVKHKVQ. A run of 5 repeats spans residues 122–143, 144–165, 166–187, 188–207, and 208–229. Residue Met193 is modified to Methionine sulfoxide. A 9; half-length repeat occupies 230 to 240; that stretch reads PALEDLRQGLL. Residues 241–264 form repeat 10; that stretch reads PVLENLKASILSSIDQASKQLAAQ.

The protein belongs to the apolipoprotein A1/A4/E family. Homodimer. Interacts with APOA1BP and CLU. Component of a sperm activating protein complex (SPAP), consisting of APOA1, an immunoglobulin heavy chain, an immunoglobulin light chain and albumin. Interacts with NDRG1. Interacts with SCGB3A2. Interacts with NAXE and YJEFN3. Glycosylated. In terms of processing, palmitoylated. Post-translationally, phosphorylation sites are present in the extracellular medium.

The protein resides in the secreted. Participates in the reverse transport of cholesterol from tissues to the liver for excretion by promoting cholesterol efflux from tissues and by acting as a cofactor for the lecithin cholesterol acyltransferase (LCAT). As part of the SPAP complex, activates spermatozoa motility. The chain is Apolipoprotein A-I (APOA1) from Cavia porcellus (Guinea pig).